Consider the following 228-residue polypeptide: Isonitrile hydratase (228 aa).

The active site involves cysteine 101.

As to quaternary structure, homodimer.

It catalyses the reaction N-cyclohexylformamide = cyclohexyl isocyanide + H2O. Its activity is regulated as follows. Sensitive to thiol reagents and oxidizing reagents, but is not influenced by chelators or reducing reagents. In terms of biological role, catalyzes the hydration of cyclohexyl isocyanide to N-cyclohexylformamide. Acts on various isonitriles, but not on nitriles or amides. Probably involved in detoxification. This Pseudomonas putida (Arthrobacter siderocapsulatus) protein is Isonitrile hydratase (inhA).